Reading from the N-terminus, the 155-residue chain is 6,7-dimethyl-8-ribityllumazine synthase (155 aa).

5-amino-6-(D-ribitylamino)uracil contacts are provided by residues phenylalanine 23, 57–59 (AFE), and 81–83 (AVI). (2S)-2-hydroxy-3-oxobutyl phosphate is bound at residue 86–87 (ST). Histidine 89 functions as the Proton donor in the catalytic mechanism. Residue phenylalanine 114 coordinates 5-amino-6-(D-ribitylamino)uracil. (2S)-2-hydroxy-3-oxobutyl phosphate is bound at residue arginine 128.

The protein belongs to the DMRL synthase family.

It catalyses the reaction (2S)-2-hydroxy-3-oxobutyl phosphate + 5-amino-6-(D-ribitylamino)uracil = 6,7-dimethyl-8-(1-D-ribityl)lumazine + phosphate + 2 H2O + H(+). Its pathway is cofactor biosynthesis; riboflavin biosynthesis; riboflavin from 2-hydroxy-3-oxobutyl phosphate and 5-amino-6-(D-ribitylamino)uracil: step 1/2. In terms of biological role, catalyzes the formation of 6,7-dimethyl-8-ribityllumazine by condensation of 5-amino-6-(D-ribitylamino)uracil with 3,4-dihydroxy-2-butanone 4-phosphate. This is the penultimate step in the biosynthesis of riboflavin. In Geobacter sulfurreducens (strain ATCC 51573 / DSM 12127 / PCA), this protein is 6,7-dimethyl-8-ribityllumazine synthase.